The following is a 617-amino-acid chain: Electron transfer flavoprotein-ubiquinone oxidoreductase, mitochondrial (617 aa).

A mitochondrion-targeting transit peptide spans 1 to 33 (MMVPLAKLASPAYQCFHALKIKKNYLPLCATRW). 75-80 (GAGPAG) contacts FAD. Lysine 96 is subject to N6-acetyllysine. An intramembrane segment occupies 109–130 (IGAHTLSGACLDPRAFEELFPD). N6-acetyllysine occurs at positions 132 and 223. Glycine 305 and glycine 306 together coordinate a ubiquinone. At lysine 357 the chain carries N6-acetyllysine. The stretch at 428 to 447 (IGLHVTEYEDNLKNSWVWKE) is an intramembrane region. Serine 551 is subject to Phosphoserine. Positions 561, 586, 589, and 592 each coordinate [4Fe-4S] cluster. Positions 577-606 (FRLQINAQNCVHCKTCDIKDPSQNINWVVP) constitute a 4Fe-4S ferredoxin-type domain.

In terms of assembly, monomer. [4Fe-4S] cluster serves as cofactor. It depends on FAD as a cofactor.

The protein resides in the mitochondrion inner membrane. It carries out the reaction a ubiquinone + reduced [electron-transfer flavoprotein] = a ubiquinol + oxidized [electron-transfer flavoprotein] + H(+). Accepts electrons from ETF and reduces ubiquinone. This is Electron transfer flavoprotein-ubiquinone oxidoreductase, mitochondrial (ETFDH) from Sus scrofa (Pig).